The sequence spans 221 residues: Phosphoribosylformylglycinamidine synthase subunit PurQ (221 aa).

A Glutamine amidotransferase type-1 domain is found at 2-221 (NVGVIVFPGS…FAGLLEPVAA (220 aa)). The active-site Nucleophile is the cysteine 86. Residues histidine 194 and glutamate 196 contribute to the active site.

Part of the FGAM synthase complex composed of 1 PurL, 1 PurQ and 2 PurS subunits.

The protein resides in the cytoplasm. The catalysed reaction is N(2)-formyl-N(1)-(5-phospho-beta-D-ribosyl)glycinamide + L-glutamine + ATP + H2O = 2-formamido-N(1)-(5-O-phospho-beta-D-ribosyl)acetamidine + L-glutamate + ADP + phosphate + H(+). The enzyme catalyses L-glutamine + H2O = L-glutamate + NH4(+). It functions in the pathway purine metabolism; IMP biosynthesis via de novo pathway; 5-amino-1-(5-phospho-D-ribosyl)imidazole from N(2)-formyl-N(1)-(5-phospho-D-ribosyl)glycinamide: step 1/2. In terms of biological role, part of the phosphoribosylformylglycinamidine synthase complex involved in the purines biosynthetic pathway. Catalyzes the ATP-dependent conversion of formylglycinamide ribonucleotide (FGAR) and glutamine to yield formylglycinamidine ribonucleotide (FGAM) and glutamate. The FGAM synthase complex is composed of three subunits. PurQ produces an ammonia molecule by converting glutamine to glutamate. PurL transfers the ammonia molecule to FGAR to form FGAM in an ATP-dependent manner. PurS interacts with PurQ and PurL and is thought to assist in the transfer of the ammonia molecule from PurQ to PurL. This chain is Phosphoribosylformylglycinamidine synthase subunit PurQ, found in Synechococcus sp. (strain ATCC 27144 / PCC 6301 / SAUG 1402/1) (Anacystis nidulans).